The primary structure comprises 79 residues: Sulfur carrier protein TusA (79 aa).

Catalysis depends on Cys17, which acts as the Cysteine persulfide intermediate.

It belongs to the sulfur carrier protein TusA family.

The protein resides in the cytoplasm. Sulfur carrier protein which probably makes part of a sulfur-relay system. This is Sulfur carrier protein TusA from Haemophilus influenzae (strain PittEE).